The primary structure comprises 275 residues: DNA-directed RNA polymerase subunit Rpo3 (275 aa).

The protein belongs to the archaeal Rpo3/eukaryotic RPB3 RNA polymerase subunit family. In terms of assembly, part of the RNA polymerase complex.

The protein resides in the cytoplasm. The enzyme catalyses RNA(n) + a ribonucleoside 5'-triphosphate = RNA(n+1) + diphosphate. In terms of biological role, DNA-dependent RNA polymerase (RNAP) catalyzes the transcription of DNA into RNA using the four ribonucleoside triphosphates as substrates. The chain is DNA-directed RNA polymerase subunit Rpo3 from Methanopyrus kandleri (strain AV19 / DSM 6324 / JCM 9639 / NBRC 100938).